Reading from the N-terminus, the 441-residue chain is Endoglucanase E-2 (441 aa).

The tat-type signal signal peptide spans 1-31; sequence MSPRPLRALLGAAAAALVSAAALAFPSQAAA. The catalytic stretch occupies residues 32–320; the sequence is NDSPFYVNPN…YEMAIAAGGT (289 aa). Residue Asp-110 is part of the active site. Cystine bridges form between Cys-111–Cys-156 and Cys-263–Cys-298. Asp-148 functions as the Proton donor in the catalytic mechanism. The active-site Nucleophile is Asp-296. The segment at 317–343 is disordered; the sequence is AGGTNPNPNPNPTPTPTPTPTPPPGSS. The segment at 321 to 340 is linker; sequence NPNPNPNPTPTPTPTPTPPP. Residues 323–341 show a composition bias toward pro residues; that stretch reads NPNPNPTPTPTPTPTPPPG. A CBM2 domain is found at 339–441; sequence PPGSSGACTA…SVPTLTCAAS (103 aa). Residues Cys-346 and Cys-438 are joined by a disulfide bond.

Belongs to the glycosyl hydrolase 6 (cellulase B) family. Homodimer. In terms of processing, predicted to be exported by the Tat system. The position of the signal peptide cleavage has been experimentally proven.

It carries out the reaction Endohydrolysis of (1-&gt;4)-beta-D-glucosidic linkages in cellulose, lichenin and cereal beta-D-glucans.. It functions in the pathway glycan metabolism; cellulose degradation. The polypeptide is Endoglucanase E-2 (celB) (Thermobifida fusca (Thermomonospora fusca)).